Reading from the N-terminus, the 154-residue chain is Myoglobin (154 aa).

One can recognise a Globin domain in the interval 2 to 148; that stretch reads GLSDGEWELV…FRNDIAAKYK (147 aa). The residue at position 4 (Ser4) is a Phosphoserine. At Thr68 the chain carries Phosphothreonine. Heme b is bound at residue His94.

It belongs to the globin family. In terms of assembly, monomeric.

It is found in the cytoplasm. The protein localises to the sarcoplasm. It carries out the reaction Fe(III)-heme b-[protein] + nitric oxide + H2O = Fe(II)-heme b-[protein] + nitrite + 2 H(+). It catalyses the reaction H2O2 + AH2 = A + 2 H2O. Monomeric heme protein which primary function is to store oxygen and facilitate its diffusion within muscle tissues. Reversibly binds oxygen through a pentacoordinated heme iron and enables its timely and efficient release as needed during periods of heightened demand. Depending on the oxidative conditions of tissues and cells, and in addition to its ability to bind oxygen, it also has a nitrite reductase activity whereby it regulates the production of bioactive nitric oxide. Under stress conditions, like hypoxia and anoxia, it also protects cells against reactive oxygen species thanks to its pseudoperoxidase activity. This chain is Myoglobin (MB), found in Elephas maximus (Indian elephant).